The chain runs to 460 residues: NADH-ubiquinone oxidoreductase chain 4 (460 aa).

13 consecutive transmembrane segments (helical) span residues 22–42 (WLWS…LSWF), 59–79 (IDPL…LMIL), 94–113 (RIYI…AFSA), 117–139 (ILFY…RWGN), 148–168 (TYFL…LLFM), 195–215 (FWWT…GVHL), 231–251 (ILAA…IIML), 258–278 (MAYP…SICL), 286–306 (MIAY…LIQT), 310–330 (FAGA…LFCL), 343–362 (LLLA…WWLL), 394–414 (ILLT…MFLM), and 436–456 (LLLT…ELIW).

Belongs to the complex I subunit 4 family.

The protein resides in the mitochondrion membrane. It catalyses the reaction a ubiquinone + NADH + 5 H(+)(in) = a ubiquinol + NAD(+) + 4 H(+)(out). Functionally, core subunit of the mitochondrial membrane respiratory chain NADH dehydrogenase (Complex I) that is believed to belong to the minimal assembly required for catalysis. Complex I functions in the transfer of electrons from NADH to the respiratory chain. The immediate electron acceptor for the enzyme is believed to be ubiquinone. This is NADH-ubiquinone oxidoreductase chain 4 (MTND4) from Scyliorhinus canicula (Small-spotted catshark).